A 328-amino-acid polypeptide reads, in one-letter code: GMP reductase (328 aa).

Residue C176 is the Thioimidate intermediate of the active site. I205–I228 is a binding site for NADP(+).

The protein belongs to the IMPDH/GMPR family. GuaC type 2 subfamily.

The catalysed reaction is IMP + NH4(+) + NADP(+) = GMP + NADPH + 2 H(+). In terms of biological role, catalyzes the irreversible NADPH-dependent deamination of GMP to IMP. It functions in the conversion of nucleobase, nucleoside and nucleotide derivatives of G to A nucleotides, and in maintaining the intracellular balance of A and G nucleotides. The chain is GMP reductase from Streptococcus pneumoniae (strain ATCC 700669 / Spain 23F-1).